The primary structure comprises 92 residues: Large ribosomal subunit protein eL43 (92 aa).

The C4-type zinc-finger motif lies at 39-60 (CQFCGKDAMKRQAVGIWGCKSC).

It belongs to the eukaryotic ribosomal protein eL43 family.

This is Large ribosomal subunit protein eL43 (RPL37A) from Cryptochiton stelleri (Giant gumboot chiton).